A 174-amino-acid chain; its full sequence is ATP-dependent protease subunit HslV (174 aa).

Threonine 2 is an active-site residue. Glycine 157, cysteine 160, and threonine 163 together coordinate Na(+).

This sequence belongs to the peptidase T1B family. HslV subfamily. In terms of assembly, a double ring-shaped homohexamer of HslV is capped on each side by a ring-shaped HslU homohexamer. The assembly of the HslU/HslV complex is dependent on binding of ATP.

It is found in the cytoplasm. The catalysed reaction is ATP-dependent cleavage of peptide bonds with broad specificity.. Its activity is regulated as follows. Allosterically activated by HslU binding. Protease subunit of a proteasome-like degradation complex believed to be a general protein degrading machinery. This is ATP-dependent protease subunit HslV from Shewanella piezotolerans (strain WP3 / JCM 13877).